A 228-amino-acid chain; its full sequence is Ribonuclease S-4 (228 aa).

The N-terminal stretch at 1–27 (MGITGMTYMFTMVLSLIVLIFSASTVG) is a signal peptide. Q36 lines the RNA pocket. The cysteines at positions 42 and 49 are disulfide-linked. An RNA-binding site is contributed by H60. The Proton donor role is filled by H60. An intrachain disulfide couples C75 to C119. N87 carries an N-linked (GlcNAc) asparagine glycan. Residue 98 to 99 (NV) participates in RNA binding. Residue N101 is glycosylated (N-linked (GlcNAc...) asparagine). RNA is bound by residues F108, 111–112 (RE), and 115–116 (KH). The active site involves E112. The active-site Proton acceptor is H116. 3 N-linked (GlcNAc...) asparagine glycosylation sites follow: N144, N160, and N175. 2 disulfides stabilise this stretch: C183-C222 and C199-C210.

The protein belongs to the RNase T2 family. Post-translationally, the N-glycans attached at Asn-101, Asn-160 and Asn-175 consist predominantly of disaccharide (GlcNAc-GlcNAc). The N-glycan at 87 is 53% monosaccharide and 47% disaccharide. The N-glycan at Asn-144 contains mannose and xylose.

Its subcellular location is the secreted. It is found in the extracellular space. It catalyses the reaction a ribonucleotidyl-ribonucleotide-RNA + H2O = a 3'-end 3'-phospho-ribonucleotide-RNA + a 5'-end dephospho-ribonucleoside-RNA + H(+). Self-incompatibility (SI) is the inherited ability of a flowering plant to prevent self-fertilization by discriminating between self and non-self pollen during pollination. In many species, self-incompatibility is controlled by the single, multiallelic locus S. This Pyrus pyrifolia (Chinese pear) protein is Ribonuclease S-4.